The chain runs to 200 residues: uncharacterized protein (200 aa).

A helical membrane pass occupies residues 104–124; the sequence is SNLLICFLFLCGLYHISVFTG.

It localises to the membrane. This is an uncharacterized protein from Escherichia coli (strain K12).